We begin with the raw amino-acid sequence, 715 residues long: Elongation factor G (715 aa).

The tr-type G domain maps to asparagine 8–threonine 290. GTP-binding positions include alanine 17 to threonine 24, aspartate 88 to histidine 92, and asparagine 142 to aspartate 145.

This sequence belongs to the TRAFAC class translation factor GTPase superfamily. Classic translation factor GTPase family. EF-G/EF-2 subfamily.

It is found in the cytoplasm. Catalyzes the GTP-dependent ribosomal translocation step during translation elongation. During this step, the ribosome changes from the pre-translocational (PRE) to the post-translocational (POST) state as the newly formed A-site-bound peptidyl-tRNA and P-site-bound deacylated tRNA move to the P and E sites, respectively. Catalyzes the coordinated movement of the two tRNA molecules, the mRNA and conformational changes in the ribosome. The chain is Elongation factor G from Ectopseudomonas mendocina (strain ymp) (Pseudomonas mendocina).